Here is a 475-residue protein sequence, read N- to C-terminus: Eukaryotic translation initiation factor 2 subunit 3 (475 aa).

The tr-type G domain maps to 38–247; the sequence is QATINIGTIG…IVNKIPVPPR (210 aa). The tract at residues 47–54 is G1; sequence GHVAHGKS. GTP is bound at residue 50-55; it reads AHGKST. The segment at 75–79 is G2; the sequence is NITIK. Residues 133–136 are G3; that stretch reads DCPG. GTP contacts are provided by residues 189 to 192 and 224 to 226; these read NKID and SAQ. Residues 189-192 form a G4 region; sequence NKID. Residues 224–226 form a G5 region; that stretch reads SAQ. Residues 456–468 are interacts with CDC123; sequence GQIFGGKTITPVL.

Belongs to the TRAFAC class translation factor GTPase superfamily. Classic translation factor GTPase family. EIF2G subfamily. Eukaryotic translation initiation factor 2 eIF2 is a heterotrimeric complex composed of an alpha, a beta and a gamma subunit. The factors eIF-1, eIF-2, eIF-3, TIF5/eIF-5 and methionyl-tRNAi form a multifactor complex (MFC) that may bind to the 40S ribosome.

It localises to the cytoplasm. The protein localises to the cytosol. It carries out the reaction GTP + H2O = GDP + phosphate + H(+). Functionally, as a subunit of eukaryotic initiation factor 2 eIF2, involved in the early steps of protein synthesis. In the presence of GTP, eIF-2 forms a ternary complex with initiator tRNA Met-tRNAi and then recruits the 40S ribosomal complex and initiation factors eIF-1, eIF-1A and eIF-3 to form the 43S pre-initiation complex (43S PIC), a step that determines the rate of protein translation. The 43S PIC binds to mRNA and scans downstream to the initiation codon, where it forms a 48S initiation complex by codon-anticodon base pairing. This leads to the displacement of eIF-1 to allow GTPase-activating protein (GAP) eIF-5-mediated hydrolysis of eIF2-bound GTP. Hydrolysis of GTP and release of Pi, which makes GTP hydrolysis irreversible, causes the release of the eIF-2-GDP binary complex from the 40S subunit, an event that is essential for the subsequent joining of the 60S ribosomal subunit to form an elongation-competent 80S ribosome. In order for eIF-2 to recycle and catalyze another round of initiation, the GDP bound to eIF-2 must be exchanged with GTP by way of a reaction catalyzed by GDP-GTP exchange factor (GEF) eIF-2B. The sequence is that of Eukaryotic translation initiation factor 2 subunit 3 from Drosophila melanogaster (Fruit fly).